We begin with the raw amino-acid sequence, 323 residues long: Lipoyl synthase (323 aa).

[4Fe-4S] cluster is bound by residues Cys-69, Cys-74, Cys-80, Cys-95, Cys-99, Cys-102, and Ser-310. The 219-residue stretch at 81–299 folds into the Radical SAM core domain; it reads WTHGTLTVMI…EAWGYELGFR (219 aa).

The protein belongs to the radical SAM superfamily. Lipoyl synthase family. [4Fe-4S] cluster serves as cofactor.

It localises to the cytoplasm. It carries out the reaction [[Fe-S] cluster scaffold protein carrying a second [4Fe-4S](2+) cluster] + N(6)-octanoyl-L-lysyl-[protein] + 2 oxidized [2Fe-2S]-[ferredoxin] + 2 S-adenosyl-L-methionine + 4 H(+) = [[Fe-S] cluster scaffold protein] + N(6)-[(R)-dihydrolipoyl]-L-lysyl-[protein] + 4 Fe(3+) + 2 hydrogen sulfide + 2 5'-deoxyadenosine + 2 L-methionine + 2 reduced [2Fe-2S]-[ferredoxin]. It functions in the pathway protein modification; protein lipoylation via endogenous pathway; protein N(6)-(lipoyl)lysine from octanoyl-[acyl-carrier-protein]: step 2/2. Catalyzes the radical-mediated insertion of two sulfur atoms into the C-6 and C-8 positions of the octanoyl moiety bound to the lipoyl domains of lipoate-dependent enzymes, thereby converting the octanoylated domains into lipoylated derivatives. In Thermus thermophilus (strain ATCC 27634 / DSM 579 / HB8), this protein is Lipoyl synthase.